Here is an 86-residue protein sequence, read N- to C-terminus: Large ribosomal subunit protein bL31 (86 aa).

Residues 66 to 86 are disordered; sequence GMGSANSATSKEQKADKDSQK. The span at 76–86 shows a compositional bias: basic and acidic residues; that stretch reads KEQKADKDSQK.

Belongs to the bacterial ribosomal protein bL31 family. Type A subfamily. As to quaternary structure, part of the 50S ribosomal subunit.

Functionally, binds the 23S rRNA. The polypeptide is Large ribosomal subunit protein bL31 (Prochlorococcus marinus (strain MIT 9215)).